The following is a 142-amino-acid chain: Large ribosomal subunit protein uL16 (142 aa).

It belongs to the universal ribosomal protein uL16 family. Part of the 50S ribosomal subunit.

Binds 23S rRNA and is also seen to make contacts with the A and possibly P site tRNAs. The sequence is that of Large ribosomal subunit protein uL16 from Gemmatimonas aurantiaca (strain DSM 14586 / JCM 11422 / NBRC 100505 / T-27).